We begin with the raw amino-acid sequence, 138 residues long: Rapid alkalinization factor 23 (138 aa).

An N-terminal signal peptide occupies residues 1 to 28 (MRGLSRNSGAAAIFAILLILAVHNWSVA). Positions 29-88 (VSSQSTEFAGDFPPFETECRGTIAECSVSAALGDGGDLFYGGGEMGEEFEMDSEINRRIL) are cleaved as a propeptide — removed in mature form. 2 disulfide bridges follow: cysteine 106-cysteine 116 and cysteine 129-cysteine 135.

This sequence belongs to the plant rapid alkalinization factor (RALF) family. Post-translationally, proteolytically cleaved, probably by SBT6.1 (S1P), a subtilisin-like serine protease (subtilase).

Its subcellular location is the secreted. In terms of biological role, cell signaling peptide that may regulate plant stress, growth, and development. Mediates a rapid alkalinization of extracellular space by mediating a transient increase in the cytoplasmic Ca(2+) concentration leading to a calcium-dependent signaling events through a cell surface receptor and a concomitant activation of some intracellular mitogen-activated protein kinases. Negatively regulates brassinolide (BL)-mediated signaling pathway (e.g. BL-induced hypocotyl elongation and branching limitation). The chain is Rapid alkalinization factor 23 (RALF23) from Arabidopsis thaliana (Mouse-ear cress).